Consider the following 127-residue polypeptide: UPF0102 protein Glov_2230 (127 aa).

The protein belongs to the UPF0102 family.

The protein is UPF0102 protein Glov_2230 of Trichlorobacter lovleyi (strain ATCC BAA-1151 / DSM 17278 / SZ) (Geobacter lovleyi).